Here is a 172-residue protein sequence, read N- to C-terminus: Small ribosomal subunit protein uS5 (172 aa).

Residues 17–80 form the S5 DRBM domain; sequence MREKMIAVNR…EEARRKMIKV (64 aa).

This sequence belongs to the universal ribosomal protein uS5 family. As to quaternary structure, part of the 30S ribosomal subunit. Contacts proteins S4 and S8.

With S4 and S12 plays an important role in translational accuracy. Functionally, located at the back of the 30S subunit body where it stabilizes the conformation of the head with respect to the body. The chain is Small ribosomal subunit protein uS5 from Janthinobacterium sp. (strain Marseille) (Minibacterium massiliensis).